The sequence spans 469 residues: UDP-glycosyltransferase 75B1 (469 aa).

His16 (proton acceptor) is an active-site residue. His16 serves as a coordination point for an anthocyanidin. Positions 334, 349, 352, 354, 357, 373, and 374 each coordinate UDP-alpha-D-glucose.

It belongs to the UDP-glycosyltransferase family. Interacts with CALS1, ROP1 and phragmoplastin.

The protein resides in the cytoplasm. It localises to the perinuclear region. Its subcellular location is the cytoskeleton. The protein localises to the phragmoplast. It catalyses the reaction (indol-3-yl)acetate + UDP-alpha-D-glucose = 1-O-(indol-3-ylacetyl)-beta-D-glucose + UDP. It functions in the pathway plant hormone metabolism; auxin conjugation. In terms of biological role, possesses low catalytic activity on indole-3-acetic acid (IAA) in vitro. May transfer UDP-glucose from sucrose synthase to callose synthase for the synthesis of callose at the forming cell plate during cytokinesis. Has high affinity for 4-aminobenzoate. Catalyzes the formation of 4-aminobenzoate glucose ester which represents a storage form of 4-aminobenzoate in the vacuole. Is the major source of this activity in the plant. Also active in vitro on benzoates and benzoate derivatives. The chain is UDP-glycosyltransferase 75B1 (UGT75B1) from Arabidopsis thaliana (Mouse-ear cress).